The following is a 161-amino-acid chain: Allophycocyanin beta chain (161 aa).

At Asn71 the chain carries N4-methylasparagine. Residue Cys81 coordinates (2R,3E)-phycocyanobilin.

This sequence belongs to the phycobiliprotein family. Heterodimer of an alpha and a beta chain. In terms of processing, contains one covalently linked phycocyanobilin chromophore.

The protein resides in the plastid. Its subcellular location is the chloroplast thylakoid membrane. Light-harvesting photosynthetic bile pigment-protein from the phycobiliprotein complex. Allophycocyanin has a maximum absorption at approximately 650 nanometers. The chain is Allophycocyanin beta chain (apcB) from Aglaothamnion neglectum (Red alga).